We begin with the raw amino-acid sequence, 442 residues long: Putative protein YjbI (442 aa).

This Escherichia coli (strain K12) protein is Putative protein YjbI (yjbI).